Consider the following 446-residue polypeptide: N-succinylarginine dihydrolase 2 (446 aa).

Substrate is bound by residues Val-20–Ser-29, Asn-111, and His-138–Arg-139. Residue Glu-175 is part of the active site. Arg-212 provides a ligand contact to substrate. His-246 is an active-site residue. Substrate contacts are provided by Asp-248 and Asn-361. Cys-367 serves as the catalytic Nucleophile.

The protein belongs to the succinylarginine dihydrolase family. As to quaternary structure, homodimer.

It carries out the reaction N(2)-succinyl-L-arginine + 2 H2O + 2 H(+) = N(2)-succinyl-L-ornithine + 2 NH4(+) + CO2. The protein operates within amino-acid degradation; L-arginine degradation via AST pathway; L-glutamate and succinate from L-arginine: step 2/5. Its function is as follows. Catalyzes the hydrolysis of N(2)-succinylarginine into N(2)-succinylornithine, ammonia and CO(2). In Caulobacter vibrioides (strain ATCC 19089 / CIP 103742 / CB 15) (Caulobacter crescentus), this protein is N-succinylarginine dihydrolase 2.